The primary structure comprises 78 residues: Large ribosomal subunit protein bL28 (78 aa).

The tract at residues Met-1–Asn-23 is disordered.

It belongs to the bacterial ribosomal protein bL28 family.

This Wigglesworthia glossinidia brevipalpis protein is Large ribosomal subunit protein bL28.